A 341-amino-acid chain; its full sequence is HTH-type transcriptional repressor PurR (341 aa).

An HTH lacI-type domain is found at 2-56 (ATIKDVAKRANVSTTTVSHVINKTRFVAEETRNAVWAAIKELHYSPSAVARSLKV). The segment at residues 4-23 (IKDVAKRANVSTTTVSHVIN) is a DNA-binding region (H-T-H motif). A DNA-binding region spans residues 48–56 (SAVARSLKV). Residues tyrosine 73, arginine 190, threonine 192, phenylalanine 221, and aspartate 275 each contribute to the hypoxanthine site.

In terms of assembly, homodimer.

It participates in purine metabolism; purine nucleotide biosynthesis [regulation]. Functionally, is the main repressor of the genes involved in the de novo synthesis of purine nucleotides, regulating purB, purC, purEK, purF, purHD, purL, purMN and guaBA expression. PurR is allosterically activated to bind its cognate DNA by binding the purine corepressors, hypoxanthine or guanine, thereby effecting transcription repression. In Salmonella arizonae (strain ATCC BAA-731 / CDC346-86 / RSK2980), this protein is HTH-type transcriptional repressor PurR.